Reading from the N-terminus, the 1007-residue chain is Serine/threonine-protein kinase PRP4 homolog (1007 aa).

Residues 1–10 show a composition bias toward polar residues; it reads MAAAETQSLR. The interval 1-99 is disordered; it reads MAAAETQSLR…EGMSPAKRTK (99 aa). An N-acetylalanine modification is found at A2. Residues S8, S20, S23, and S32 each carry the phosphoserine modification. 2 stretches are compositionally biased toward basic residues: residues 39-59 and 67-81; these read KHSR…KHKH and KKHK…HKRK. Positions 82 to 91 are enriched in basic and acidic residues; the sequence is EVIDASDKEG. Phosphoserine occurs at positions 87 and 93. K99 carries the N6-acetyllysine; alternate modification. A Glycyl lysine isopeptide (Lys-Gly) (interchain with G-Cter in SUMO2); alternate cross-link involves residue K99. Residue K111 forms a Glycyl lysine isopeptide (Lys-Gly) (interchain with G-Cter in SUMO2) linkage. K117 participates in a covalent cross-link: Glycyl lysine isopeptide (Lys-Gly) (interchain with G-Cter in SUMO2); alternate. K117 is covalently cross-linked (Glycyl lysine isopeptide (Lys-Gly) (interchain with G-Cter in SUMO1); alternate). The residue at position 131 (S131) is a Phosphoserine. Y140 bears the Phosphotyrosine mark. 2 disordered regions span residues 140-533 and 559-583; these read YESG…EEED and SNMS…SPDD. A phosphoserine mark is found at S142, S144, and S166. Positions 157–168 are enriched in low complexity; the sequence is GNRSSTRSSSTK. Residues K170 and K177 each participate in a glycyl lysine isopeptide (Lys-Gly) (interchain with G-Cter in SUMO2) cross-link. Composition is skewed to basic residues over residues 179–202 and 214–230; these read TTKK…KKSK and RSKS…SKRS. S239, S241, S257, S277, S283, S292, and S294 each carry phosphoserine. Residues 247–270 are compositionally biased toward basic and acidic residues; it reads RSQEKIGKARSPTDDKVKIEDKSK. Residues 302–315 show a composition bias toward basic residues; it reads SKDRRSRSKERKSK. Residues 316–325 are compositionally biased toward basic and acidic residues; sequence RSETDKEKKP. Residues S328, S354, S356, S366, and S368 each carry the phosphoserine modification. The segment covering 342 to 367 has biased composition (basic residues); sequence PSRRPGRSPKRRSLSPKPRDKSRRSR. A Phosphothreonine modification is found at T385. Residue S387 is modified to Phosphoserine. Basic and acidic residues-rich tracts occupy residues 395–408 and 415–429; these read RSLE…ERRR and RPRD…RSKD. Residues S427, S431, and S437 each carry the phosphoserine modification. The span at 438–497 shows a compositional bias: basic residues; sequence PTRRRSRSPIRRRSRSPLRRSRSPRRRSRSPRRRDRGRRSRSRLRRRSRSRGGRRRRSRS. A phosphoserine mark is found at S518, S519, S520, S565, S569, S578, and S580. A compositionally biased stretch (acidic residues) spans 518-533; that stretch reads SSSDDNLEDFDVEEED. Positions 562–581 are enriched in low complexity; sequence SVPSEPSSPQSSTRTRSPSP. Residues K593 and K659 each participate in a glycyl lysine isopeptide (Lys-Gly) (interchain with G-Cter in SUMO2) cross-link. The 317-residue stretch at 687-1003 folds into the Protein kinase domain; the sequence is YNVYGYTGQG…INQALQHAFI (317 aa). ATP contacts are provided by residues 693 to 701 and K717; that span reads TGQGVFSNV. An N6-acetyllysine modification is found at K717. The Proton acceptor role is filled by D815. A Phosphotyrosine modification is found at Y849. Position 852 is a phosphoserine (S852).

It belongs to the protein kinase superfamily. CMGC Ser/Thr protein kinase family. As to quaternary structure, interacts with CLK1 C-terminus. Associates with the U5 snRNP and NCOR1 deacetylase complexes. Identified in the spliceosome C complex. Post-translationally, phosphorylated by CLK1. Autophosphorylated; phosphorylation inhibits interaction with its targets, such as PRPF6 or SMARCA4.

It localises to the nucleus. The protein resides in the chromosome. It is found in the centromere. The protein localises to the kinetochore. It catalyses the reaction L-seryl-[protein] + ATP = O-phospho-L-seryl-[protein] + ADP + H(+). It carries out the reaction L-threonyl-[protein] + ATP = O-phospho-L-threonyl-[protein] + ADP + H(+). Serine/threonine kinase involved in spliceosomal assembly as well as mitosis and signaling regulation. Connects chromatin mediated regulation of transcription and pre-mRNA splicing. During spliceosomal assembly, interacts with and phosphorylates PRPF6 and PRPF31, components of the U4/U6-U5 tri-small nuclear ribonucleoprotein (snRNP), to facilitate the formation of the spliceosome B complex. Plays a role in regulating transcription and the spindle assembly checkpoint (SAC). Associates with U5 snRNP and NCOR1 deacetylase complexes which may allow a coordination of pre-mRNA splicing with chromatin remodeling events involved in transcriptional regulation. Associates and probably phosphorylates SMARCA4 and NCOR1. Phosphorylates SRSF1. Associates with kinetochores during mitosis and is necessary for recruitment and maintenance of the checkpoint proteins such as MAD1L1 and MAD12L1 at the kinetochores. Phosphorylates and regulates the activity of the transcription factors such as ELK1 and KLF13. Phosphorylates nuclear YAP1 and WWTR1/TAZ which induces nuclear exclusion and regulates Hippo signaling pathway, involved in tissue growth control. The polypeptide is Serine/threonine-protein kinase PRP4 homolog (PRP4K) (Pongo abelii (Sumatran orangutan)).